A 509-amino-acid polypeptide reads, in one-letter code: ATP synthase subunit alpha (509 aa).

Residue 169 to 176 (GDRQTGKT) coordinates ATP.

This sequence belongs to the ATPase alpha/beta chains family. As to quaternary structure, F-type ATPases have 2 components, CF(1) - the catalytic core - and CF(0) - the membrane proton channel. CF(1) has five subunits: alpha(3), beta(3), gamma(1), delta(1), epsilon(1). CF(0) has three main subunits: a(1), b(2) and c(9-12). The alpha and beta chains form an alternating ring which encloses part of the gamma chain. CF(1) is attached to CF(0) by a central stalk formed by the gamma and epsilon chains, while a peripheral stalk is formed by the delta and b chains.

It localises to the cell inner membrane. It catalyses the reaction ATP + H2O + 4 H(+)(in) = ADP + phosphate + 5 H(+)(out). Produces ATP from ADP in the presence of a proton gradient across the membrane. The alpha chain is a regulatory subunit. In Paramagnetospirillum magneticum (strain ATCC 700264 / AMB-1) (Magnetospirillum magneticum), this protein is ATP synthase subunit alpha.